Consider the following 82-residue polypeptide: NAD(P)H-quinone oxidoreductase subunit O, organellar chromatophore (82 aa).

Belongs to the complex I NdhO subunit family. In terms of assembly, NDH-1 can be composed of about 15 different subunits; different subcomplexes with different compositions have been identified which probably have different functions.

Its subcellular location is the plastid. It localises to the organellar chromatophore thylakoid membrane. The catalysed reaction is a plastoquinone + NADH + (n+1) H(+)(in) = a plastoquinol + NAD(+) + n H(+)(out). It catalyses the reaction a plastoquinone + NADPH + (n+1) H(+)(in) = a plastoquinol + NADP(+) + n H(+)(out). Functionally, NDH-1 shuttles electrons from an unknown electron donor, via FMN and iron-sulfur (Fe-S) centers, to quinones in the respiratory and/or the photosynthetic chain. The immediate electron acceptor for the enzyme in this species is believed to be plastoquinone. Couples the redox reaction to proton translocation, and thus conserves the redox energy in a proton gradient. Cyanobacterial NDH-1 also plays a role in inorganic carbon-concentration. The chain is NAD(P)H-quinone oxidoreductase subunit O, organellar chromatophore from Paulinella chromatophora.